Reading from the N-terminus, the 3198-residue chain is Helicase domino (3198 aa).

Gly residues predominate over residues 1–12; the sequence is MNEGNSAGGGHE. 3 disordered regions span residues 1-27, 93-112, and 119-148; these read MNEG…RVTP, LPQQ…APAH, and SSTI…AASI. Basic and acidic residues predominate over residues 134–143; it reads QRLDDNEDRT. A coiled-coil region spans residues 187–212; the sequence is KKRILQQKLQILRNLKERHLENVSEY. 2 disordered regions span residues 256–350 and 391–474; these read TSAA…SATS and GGTP…TPNS. 2 stretches are compositionally biased toward polar residues: residues 264-281 and 297-329; these read QNQK…SSLV and NISN…TESN. Residues 330–350 are compositionally biased toward low complexity; sequence SSTTVPGTATSGAATSTSATS. Residues 391 to 404 show a composition bias toward polar residues; it reads GGTPLLPCNTSAGS. Positions 452–464 are enriched in low complexity; the sequence is PGTPTSGSLLSPA. In terms of domain architecture, HSA spans 507-579; that stretch reads LPKLQEPSRP…QELQLKRVAS (73 aa). The disordered stretch occupies residues 635 to 848; that stretch reads NKSVADTPSL…DMEEQDEQED (214 aa). The segment covering 638–650 has biased composition (polar residues); sequence VADTPSLNSSRLT. A compositionally biased stretch (basic and acidic residues) spans 652–664; the sequence is PKRESDDDFRPES. Phosphoserine is present on residues serine 656, serine 664, and serine 666. The stretch at 666–696 forms a coiled coil; it reads SEDDEETIAKAEEDAADVKEEVTALAKESEM. Basic and acidic residues-rich tracts occupy residues 672 to 695 and 711 to 721; these read TIAK…KESE and ENRDKLMKEEQ. A Phosphothreonine modification is found at threonine 729. A phosphoserine mark is found at serine 733, serine 736, and serine 744. The stretch at 741 to 784 forms a coiled coil; it reads KEASDDDENTISKQEEAEQEIDHKKEIDELEADNDLSVEQLLAK. The span at 753–767 shows a compositional bias: basic and acidic residues; the sequence is KQEEAEQEIDHKKEI. Residues 805 to 831 show a composition bias toward acidic residues; it reads LDSDDDSTAVDSTEESEDAATEDEEDL. Residue threonine 838 is modified to Phosphothreonine. The Helicase ATP-binding domain maps to 926-1091; the sequence is VTMNERKLNG…WSLMHFLMPY (166 aa). Residue 939-946 participates in ATP binding; sequence DEMGLGKT. The interval 1471–1492 is disordered; the sequence is VQKQSIANGKTEPEEETEAEDP. A Helicase C-terminal domain is found at 1662-1812; the sequence is TMDRLLRQLK…DMAIEGGNFT (151 aa). The tract at residues 1828–1856 is disordered; it reads EQSEQDESSQEKSENKDRIVATTTLSDTP. Residues 1836 to 1846 show a composition bias toward basic and acidic residues; that stretch reads SQEKSENKDRI. Residues 1951 to 1996 adopt a coiled-coil conformation; that stretch reads AAWTAEQLRAAEAELEAQKREWEANRLAAMHKEEELLKQETEAEEM. The disordered stretch occupies residues 2061–2100; it reads KEHKRSRTDAGYDGSRRPNKMRREDNYVPPRSLFDRPTPQ. Residues 2067–2086 are compositionally biased toward basic and acidic residues; it reads RTDAGYDGSRRPNKMRREDN. Residues 2136 to 2205 form the Myb-like domain; the sequence is TEPEAMAEWC…QCRWRYETHI (70 aa). Residues 2318–2362 are disordered; the sequence is IREKQRGQQMSQPPVGVGVVQQMQQQSQQQQQPAPPPLPQQQQPQ. The span at 2325–2349 shows a compositional bias: low complexity; the sequence is QQMSQPPVGVGVVQQMQQQSQQQQQ.

This sequence belongs to the SNF2/RAD54 helicase family. SWR1 subfamily. Component of the Tip60 chromatin-remodeling complex which contains Domino, Tip60, Tra1, Brd8, E(Pc), DMAP1, Pontin, Reptin, Ing3, Act87E, BAP55, Mrg15, MrgBP, Gas41 and YL-1. In terms of tissue distribution, isoform B is present at high levels in ovary, in follicle cells, nurse cells and oocyte. Isoform B is also present in germline and somatic stem cells from the germarium. Isoform A is undetectable in adult ovary (at protein level).

It localises to the nucleus. Functionally, mediates the ATP-dependent exchange of unmodified histone H2AV for its phosphorylated and acetylated form H2AVK5acS138ph, leading to transcriptional regulation of selected genes by chromatin remodeling. Involved in Notch signaling. Represses E2F target genes. Required for somatic stem cell self-renewal but not for germline stem cell self-renewal. Involved in oogenesis. The polypeptide is Helicase domino (dom) (Drosophila melanogaster (Fruit fly)).